Consider the following 127-residue polypeptide: MKAIFIILAILMVTQAFKMTSKVKSMNMSRNMSKNTSTLGTKYTYGCPQTNTPTQQDCYDAMYYTFMAMCDLYPDPEHPMFPSYDSCQEESDSADEFYTNQCGCGGYGMAAAHDQVCLLALGVCIPE.

The first 16 residues, 1–16 (MKAIFIILAILMVTQA), serve as a signal peptide directing secretion. Residues 17 to 42 (FKMTSKVKSMNMSRNMSKNTSTLGTK) constitute a propeptide that is removed on maturation.

It is found in the secreted. In terms of biological role, mating ciliate pheromones (or gamones) are diffusible extracellular communication signals that distinguish different intraspecific classes of cells commonly referred to as 'mating types'. They prepare the latter for conjugation by changing their cell surface properties. The sequence is that of Mating pheromone 4 (PHR4) from Euplotoides octocarinatus (Freshwater ciliate).